We begin with the raw amino-acid sequence, 510 residues long: Probable mannosyl-oligosaccharide alpha-1,2-mannosidase 1B (510 aa).

An N-terminal signal peptide occupies residues 1 to 21; that stretch reads MHFSSLSLPLTALSLVTPSLA. Asn35, Asn95, Asn182, and Asn249 each carry an N-linked (GlcNAc...) asparagine glycan. Cys332 and Cys361 form a disulfide bridge. Residue Asn366 is glycosylated (N-linked (GlcNAc...) asparagine). Glu375 functions as the Proton donor in the catalytic mechanism. Residue Thr501 coordinates Ca(2+).

It belongs to the glycosyl hydrolase 47 family. In terms of assembly, monomer. It depends on Ca(2+) as a cofactor. Requires Mg(2+) as cofactor.

The protein localises to the cytoplasmic vesicle lumen. The catalysed reaction is N(4)-(alpha-D-Man-(1-&gt;2)-alpha-D-Man-(1-&gt;2)-alpha-D-Man-(1-&gt;3)-[alpha-D-Man-(1-&gt;2)-alpha-D-Man-(1-&gt;3)-[alpha-D-Man-(1-&gt;2)-alpha-D-Man-(1-&gt;6)]-alpha-D-Man-(1-&gt;6)]-beta-D-Man-(1-&gt;4)-beta-D-GlcNAc-(1-&gt;4)-beta-D-GlcNAc)-L-asparaginyl-[protein] (N-glucan mannose isomer 9A1,2,3B1,2,3) + 4 H2O = N(4)-(alpha-D-Man-(1-&gt;3)-[alpha-D-Man-(1-&gt;3)-[alpha-D-Man-(1-&gt;6)]-alpha-D-Man-(1-&gt;6)]-beta-D-Man-(1-&gt;4)-beta-D-GlcNAc-(1-&gt;4)-beta-D-GlcNAc)-L-asparaginyl-[protein] (N-glucan mannose isomer 5A1,2) + 4 beta-D-mannose. It carries out the reaction N(4)-(alpha-D-Man-(1-&gt;2)-alpha-D-Man-(1-&gt;2)-alpha-D-Man-(1-&gt;3)-[alpha-D-Man-(1-&gt;3)-[alpha-D-Man-(1-&gt;2)-alpha-D-Man-(1-&gt;6)]-alpha-D-Man-(1-&gt;6)]-beta-D-Man-(1-&gt;4)-beta-D-GlcNAc-(1-&gt;4)-beta-D-GlcNAc)-L-asparaginyl-[protein] (N-glucan mannose isomer 8A1,2,3B1,3) + 3 H2O = N(4)-(alpha-D-Man-(1-&gt;3)-[alpha-D-Man-(1-&gt;3)-[alpha-D-Man-(1-&gt;6)]-alpha-D-Man-(1-&gt;6)]-beta-D-Man-(1-&gt;4)-beta-D-GlcNAc-(1-&gt;4)-beta-D-GlcNAc)-L-asparaginyl-[protein] (N-glucan mannose isomer 5A1,2) + 3 beta-D-mannose. The protein operates within protein modification; protein glycosylation. Involved in the maturation of Asn-linked oligosaccharides. Progressively trims alpha-1,2-linked mannose residues from Man(9)GlcNAc(2) to produce Man(5)GlcNAc(2). The polypeptide is Probable mannosyl-oligosaccharide alpha-1,2-mannosidase 1B (mns1B) (Aspergillus flavus (strain ATCC 200026 / FGSC A1120 / IAM 13836 / NRRL 3357 / JCM 12722 / SRRC 167)).